Reading from the N-terminus, the 665-residue chain is Probable potassium transport system protein Kup (665 aa).

12 consecutive transmembrane segments (helical) span residues 15 to 35 (SFLI…LYVM), 48 to 68 (ITPD…TLLT), 100 to 120 (WLII…MLTP), 147 to 167 (IIII…HFGT), 173 to 193 (IFGP…IVNL), 219 to 239 (LGFF…ALYS), 251 to 271 (LTWP…AAWI), 292 to 312 (MMPS…AIIA), 348 to 368 (IYMP…VLYF), 378 to 398 (YGLS…NYLL), 403 to 423 (PLPI…SFLI), and 431 to 451 (KGGF…YIWI).

Belongs to the HAK/KUP transporter (TC 2.A.72) family.

It localises to the cell membrane. The enzyme catalyses K(+)(in) + H(+)(in) = K(+)(out) + H(+)(out). Its function is as follows. Transport of potassium into the cell. Likely operates as a K(+):H(+) symporter. The polypeptide is Probable potassium transport system protein Kup (Clostridium perfringens (strain ATCC 13124 / DSM 756 / JCM 1290 / NCIMB 6125 / NCTC 8237 / Type A)).